We begin with the raw amino-acid sequence, 862 residues long: Semaphorin-4D (862 aa).

Residues Met-1–Ala-21 form the signal peptide. Positions Met-22 to Leu-500 constitute a Sema domain. Topologically, residues Met-22 to Arg-734 are extracellular. 2 N-linked (GlcNAc...) asparagine glycosylation sites follow: Asn-49 and Asn-77. 2 cysteine pairs are disulfide-bonded: Cys-97–Cys-108 and Cys-126–Cys-135. Asn-139 and Asn-191 each carry an N-linked (GlcNAc...) asparagine glycan. Intrachain disulfides connect Cys-257-Cys-370 and Cys-281-Cys-326. N-linked (GlcNAc...) asparagine glycosylation is found at Asn-329, Asn-379, and Asn-419. Residues Phe-502–Ser-551 enclose the PSI domain. Cystine bridges form between Cys-503–Cys-520, Cys-509–Cys-553, Cys-512–Cys-529, and Cys-576–Cys-624. The region spanning Pro-554 to Phe-636 is the Ig-like C2-type domain. Asn-613 and Asn-632 each carry an N-linked (GlcNAc...) asparagine glycan. The helical transmembrane segment at Leu-735–Cys-755 threads the bilayer. Residues Tyr-756–Asp-862 are Cytoplasmic-facing. The tract at residues Val-794–Asp-837 is disordered. Positions Pro-827–Asp-837 are enriched in basic and acidic residues. Ser-833 carries the post-translational modification Phosphoserine.

It belongs to the semaphorin family. In terms of assembly, homodimer. Interacts with PLXNB2. Interacts with PLXNB1. As to expression, strongly expressed in skeletal muscle, peripheral blood lymphocytes, spleen, and thymus and also expressed at lower levels in testes, brain, kidney, small intestine, prostate, heart, placenta, lung and pancreas, but not in colon and liver.

The protein localises to the cell membrane. Cell surface receptor for PLXNB1 and PLXNB2 that plays an important role in cell-cell signaling. Regulates GABAergic synapse development. Promotes the development of inhibitory synapses in a PLXNB1-dependent manner. Modulates the complexity and arborization of developing neurites in hippocampal neurons by activating PLXNB1 and interaction with PLXNB1 mediates activation of RHOA. Promotes the migration of cerebellar granule cells. Plays a role in the immune system; induces B-cells to aggregate and improves their viability (in vitro). Induces endothelial cell migration through the activation of PTK2B/PYK2, SRC, and the phosphatidylinositol 3-kinase-AKT pathway. The protein is Semaphorin-4D (SEMA4D) of Homo sapiens (Human).